The chain runs to 343 residues: Tetraacyldisaccharide 4'-kinase (343 aa).

Residue 51–58 (HGGGAGKT) participates in ATP binding.

This sequence belongs to the LpxK family.

The catalysed reaction is a lipid A disaccharide + ATP = a lipid IVA + ADP + H(+). It functions in the pathway glycolipid biosynthesis; lipid IV(A) biosynthesis; lipid IV(A) from (3R)-3-hydroxytetradecanoyl-[acyl-carrier-protein] and UDP-N-acetyl-alpha-D-glucosamine: step 6/6. In terms of biological role, transfers the gamma-phosphate of ATP to the 4'-position of a tetraacyldisaccharide 1-phosphate intermediate (termed DS-1-P) to form tetraacyldisaccharide 1,4'-bis-phosphate (lipid IVA). This chain is Tetraacyldisaccharide 4'-kinase, found in Rhodopseudomonas palustris (strain BisB18).